An 85-amino-acid chain; its full sequence is MKVTLISILTCAAVLVLHTTAAEELEAESQLMEVGMPDTELAAVDEERLFECSVSCEIEKEGNKDCKKKKCKGGWKCKFNMCVKV.

An N-terminal signal peptide occupies residues Met-1–Ala-22. Positions Glu-23 to Arg-48 are excised as a propeptide. 3 disulfides stabilise this stretch: Cys-52-Cys-66, Cys-56-Cys-77, and Cys-71-Cys-82.

Belongs to the neurotoxin 12 (Hwtx-2) family. 02 (Hwtx-2) subfamily. In terms of assembly, monomer. Expressed by the venom gland.

It localises to the secreted. Neurotoxin active on both insects and mammals. The polypeptide is U4-theraphotoxin-Hhn1a (Cyriopagopus hainanus (Chinese bird spider)).